A 486-amino-acid chain; its full sequence is Cardiolipin synthase A (486 aa).

2 consecutive transmembrane segments (helical) span residues 3-23 and 38-58; these read TFYT…IAGV and MAWL…YLSV. 2 PLD phosphodiesterase domains span residues 219–246 and 399–426; these read MDLR…VDPR and EGGL…DMRS. Catalysis depends on residues His-224, Lys-226, Asp-231, His-404, Lys-406, and Asp-411.

Belongs to the phospholipase D family. Cardiolipin synthase subfamily. ClsA sub-subfamily.

The protein resides in the cell inner membrane. The catalysed reaction is 2 a 1,2-diacyl-sn-glycero-3-phospho-(1'-sn-glycerol) = a cardiolipin + glycerol. Its function is as follows. Catalyzes the reversible phosphatidyl group transfer from one phosphatidylglycerol molecule to another to form cardiolipin (CL) (diphosphatidylglycerol) and glycerol. The protein is Cardiolipin synthase A of Salmonella paratyphi A (strain ATCC 9150 / SARB42).